The following is a 160-amino-acid chain: Cathelin-related peptide SC5 (160 aa).

An N-terminal signal peptide occupies residues 1–29; that stretch reads METQRASLSLGRCSLWLLLLGLALPSASA. Residues 30–131 constitute a propeptide that is removed on maturation; sequence QVLSYREAVL…DITCAEPQSV (102 aa). Cystine bridges form between Cys86/Cys97 and Cys108/Cys125.

It belongs to the cathelicidin family.

It is found in the secreted. Functionally, broad spectrum bactericidal agent. The protein is Cathelin-related peptide SC5 of Ovis aries (Sheep).